Consider the following 304-residue polypeptide: uncharacterized protein (304 aa).

This is an uncharacterized protein from Ureaplasma parvum serovar 3 (strain ATCC 700970).